A 286-amino-acid chain; its full sequence is L-cysteine S-thiosulfotransferase subunit SoxA (286 aa).

Positions 1–28 are cleaved as a signal peptide; it reads MKKTIQRGLFTGALVLLTAMTSKPAHAA. Cys106 and Cys137 form a disulfide bridge. Residues 180 to 286 form the Cytochrome c domain; the sequence is DAYMKGKEMF…LKFNGPASRK (107 aa). Residues Cys200 and His204 each contribute to the heme site. Substrate is bound at residue Arg243. A heme-binding site is contributed by Cys247. Cys247 serves as the catalytic Cysteine persulfide intermediate.

The protein belongs to the SoxA family. Heterodimer of SoxA and SoxX. The SoxAX complex interacts with CT1020, SoxAX-binding protein SaxB (SoxK); this interaction stimulates catalytic activity of the complex. The cofactor is heme. Cysteine persulfide at Cys-247.

The protein localises to the periplasm. The enzyme catalyses L-cysteinyl-[SoxY protein] + thiosulfate + 2 Fe(III)-[cytochrome c] = S-sulfosulfanyl-L-cysteinyl-[SoxY protein] + 2 Fe(II)-[cytochrome c] + 2 H(+). It catalyses the reaction S-sulfanyl-L-cysteinyl-[SoxY protein] + thiosulfate + 2 Fe(III)-[cytochrome c] = S-(2-sulfodisulfanyl)-L-cysteinyl-[SoxY protein] + 2 Fe(II)-[cytochrome c] + 2 H(+). In terms of biological role, C-type monoheme cytochrome, which is part of the SoxAX cytochrome complex involved in sulfur oxidation. The SoxAX complex catalyzes the formation of a heterodisulfide bond between the conserved cysteine residue on a sulfur carrier SoxYZ complex subunit SoxY and thiosulfate or other inorganic sulfur substrates. This leads to the liberation of two electrons, which may be transferred from the SoxAX complex to another cytochrome c and which then may be used for reductive CO(2) fixation. This is L-cysteine S-thiosulfotransferase subunit SoxA from Chlorobaculum thiosulfatiphilum (Chlorobium limicola f.sp. thiosulfatophilum).